A 216-amino-acid chain; its full sequence is Probable nicotinate-nucleotide adenylyltransferase (216 aa).

Belongs to the NadD family.

The catalysed reaction is nicotinate beta-D-ribonucleotide + ATP + H(+) = deamido-NAD(+) + diphosphate. It participates in cofactor biosynthesis; NAD(+) biosynthesis; deamido-NAD(+) from nicotinate D-ribonucleotide: step 1/1. Functionally, catalyzes the reversible adenylation of nicotinate mononucleotide (NaMN) to nicotinic acid adenine dinucleotide (NaAD). This Klebsiella pneumoniae subsp. pneumoniae (strain ATCC 700721 / MGH 78578) protein is Probable nicotinate-nucleotide adenylyltransferase.